Consider the following 421-residue polypeptide: 3-phosphoshikimate 1-carboxyvinyltransferase (421 aa).

The 3-phosphoshikimate site is built by Lys20, Ser21, and Arg25. A phosphoenolpyruvate-binding site is contributed by Lys20. 2 residues coordinate phosphoenolpyruvate: Gly90 and Arg117. 3-phosphoshikimate-binding residues include Ser162, Ser163, Gln164, Ser190, Asp304, and Lys331. Phosphoenolpyruvate is bound at residue Gln164. Residue Asp304 is the Proton acceptor of the active site. 2 residues coordinate phosphoenolpyruvate: Arg335 and Arg376.

This sequence belongs to the EPSP synthase family. Monomer.

The protein localises to the cytoplasm. It catalyses the reaction 3-phosphoshikimate + phosphoenolpyruvate = 5-O-(1-carboxyvinyl)-3-phosphoshikimate + phosphate. It participates in metabolic intermediate biosynthesis; chorismate biosynthesis. Catalyzes the transfer of the enolpyruvyl moiety of phosphoenolpyruvate (PEP) to the 5-hydroxyl of shikimate-3-phosphate (S3P) to produce enolpyruvyl shikimate-3-phosphate and inorganic phosphate. This Methanothrix thermoacetophila (strain DSM 6194 / JCM 14653 / NBRC 101360 / PT) (Methanosaeta thermophila) protein is 3-phosphoshikimate 1-carboxyvinyltransferase.